The primary structure comprises 323 residues: Peroxidase 16 (323 aa).

Residues 1–23 (MKNQSSFSIVALLLIFFSSSVFA) form the signal peptide. 4 disulfide bridges follow: cysteine 34–cysteine 113, cysteine 67–cysteine 72, cysteine 119–cysteine 319, and cysteine 198–cysteine 230. The Proton acceptor role is filled by histidine 65. Residues aspartate 66, valine 69, glycine 71, aspartate 73, and serine 75 each coordinate Ca(2+). A substrate-binding site is contributed by proline 161. Heme b is bound at residue histidine 191. Residue threonine 192 coordinates Ca(2+). Residues aspartate 243, serine 246, and aspartate 251 each coordinate Ca(2+).

It belongs to the peroxidase family. Classical plant (class III) peroxidase subfamily. Heme b is required as a cofactor. Ca(2+) serves as cofactor. In terms of tissue distribution, expressed in the whole plant, but preferentially in roots and leaves.

The protein localises to the secreted. The catalysed reaction is 2 a phenolic donor + H2O2 = 2 a phenolic radical donor + 2 H2O. Removal of H(2)O(2), oxidation of toxic reductants, biosynthesis and degradation of lignin, suberization, auxin catabolism, response to environmental stresses such as wounding, pathogen attack and oxidative stress. These functions might be dependent on each isozyme/isoform in each plant tissue. The chain is Peroxidase 16 (PER16) from Arabidopsis thaliana (Mouse-ear cress).